Here is a 428-residue protein sequence, read N- to C-terminus: Putative zinc metalloprotease LL2128 (428 aa).

Histidine 19 is a binding site for Zn(2+). Glutamate 20 is a catalytic residue. Residue histidine 23 coordinates Zn(2+). The next 3 helical transmembrane spans lie at 188–210, 354–376, and 401–423; these read GPLNNFILGIIAFIVLTFVQGGV, IVYLLAMLSINLGIVNLFPIPVL, and IITMVGVVFMLVLFVAVTWNDIL. The PDZ domain occupies 188-282; that stretch reads GPLNNFILGI…SETLSVTPKK (95 aa).

The protein belongs to the peptidase M50B family. The cofactor is Zn(2+).

It localises to the cell membrane. The chain is Putative zinc metalloprotease LL2128 from Lactococcus lactis subsp. lactis (strain IL1403) (Streptococcus lactis).